Consider the following 227-residue polypeptide: NADH-quinone oxidoreductase subunit C (227 aa).

Belongs to the complex I 30 kDa subunit family. As to quaternary structure, NDH-1 is composed of 14 different subunits. Subunits NuoB, C, D, E, F, and G constitute the peripheral sector of the complex.

It localises to the cell inner membrane. The catalysed reaction is a quinone + NADH + 5 H(+)(in) = a quinol + NAD(+) + 4 H(+)(out). Its function is as follows. NDH-1 shuttles electrons from NADH, via FMN and iron-sulfur (Fe-S) centers, to quinones in the respiratory chain. The immediate electron acceptor for the enzyme in this species is believed to be ubiquinone. Couples the redox reaction to proton translocation (for every two electrons transferred, four hydrogen ions are translocated across the cytoplasmic membrane), and thus conserves the redox energy in a proton gradient. The chain is NADH-quinone oxidoreductase subunit C from Coxiella burnetii (strain Dugway 5J108-111).